The primary structure comprises 297 residues: uncharacterized protein (297 aa).

Residues 175-199 (VLPTNRNNPVRSNVDIKPVNPPSSK) are disordered. Over residues 176–185 (LPTNRNNPVR) the composition is skewed to polar residues. N-linked (GlcNAc...) asparagine; by host glycosylation occurs at Asn-269. A helical transmembrane segment spans residues 277 to 297 (LFGSPVLLICVASLLLLIIIL).

The protein belongs to the ascovirus HvAV ORF18 family.

The protein localises to the membrane. This is an uncharacterized protein from Noctuidae (owlet moths).